A 225-amino-acid polypeptide reads, in one-letter code: Urease accessory protein UreF (225 aa).

It belongs to the UreF family. In terms of assembly, ureD, UreF and UreG form a complex that acts as a GTP-hydrolysis-dependent molecular chaperone, activating the urease apoprotein by helping to assemble the nickel containing metallocenter of UreC. The UreE protein probably delivers the nickel.

It localises to the cytoplasm. In terms of biological role, required for maturation of urease via the functional incorporation of the urease nickel metallocenter. The sequence is that of Urease accessory protein UreF from Picosynechococcus sp. (strain ATCC 27264 / PCC 7002 / PR-6) (Agmenellum quadruplicatum).